We begin with the raw amino-acid sequence, 244 residues long: 2,5-diamino-6-ribosylamino-4(3H)-pyrimidinone 5'-phosphate reductase (244 aa).

NADP(+) is bound by residues Thr74, Asp78, Ile160, and 183-187 (GSHVI).

This sequence belongs to the HTP reductase family. Homodimer.

It catalyses the reaction 2,5-diamino-6-(1-D-ribitylamino)pyrimidin-4(3H)-one 5'-phosphate + NADP(+) = 2,5-diamino-6-(1-D-ribosylamino)pyrimidin-4(3H)-one 5'-phosphate + NADPH + H(+). The catalysed reaction is 2,5-diamino-6-(1-D-ribitylamino)pyrimidin-4(3H)-one 5'-phosphate + NAD(+) = 2,5-diamino-6-(1-D-ribosylamino)pyrimidin-4(3H)-one 5'-phosphate + NADH + H(+). The protein operates within cofactor biosynthesis; riboflavin biosynthesis. Its function is as follows. Catalyzes an early step in riboflavin biosynthesis, the NADPH-dependent reduction of the ribose side chain of 2,5-diamino-6-ribosylamino-4(3H)-pyrimidinone 5'-phosphate, yielding 2,5-diamino-6-ribitylamino-4(3H)-pyrimidinone 5'-phosphate. The sequence is that of 2,5-diamino-6-ribosylamino-4(3H)-pyrimidinone 5'-phosphate reductase (RIB7) from Candida glabrata (strain ATCC 2001 / BCRC 20586 / JCM 3761 / NBRC 0622 / NRRL Y-65 / CBS 138) (Yeast).